A 168-amino-acid polypeptide reads, in one-letter code: Transcriptional regulator MraZ (168 aa).

SpoVT-AbrB domains lie at 8–51 (EYNQ…GGDR) and 90–140 (ALNM…KADT).

This sequence belongs to the MraZ family. As to quaternary structure, forms oligomers.

It localises to the cytoplasm. Its subcellular location is the nucleoid. This Cereibacter sphaeroides (strain ATCC 17025 / ATH 2.4.3) (Rhodobacter sphaeroides) protein is Transcriptional regulator MraZ.